The chain runs to 210 residues: 3-hydroxy-3-methylglutaryl-coenzyme A reductase 2 (210 aa).

Active-site charge relay system residues include lysine 21 and aspartate 97. The helical transmembrane segment at 166–186 (LLATIVAGSVLAGELSLMSAI) threads the bilayer. Histidine 195 (proton donor) is an active-site residue. Asparagine 199 carries an N-linked (GlcNAc...) asparagine glycan.

The protein belongs to the HMG-CoA reductase family.

The protein localises to the endoplasmic reticulum membrane. It is found in the mitochondrion membrane. It localises to the plastid membrane. It carries out the reaction (R)-mevalonate + 2 NADP(+) + CoA = (3S)-3-hydroxy-3-methylglutaryl-CoA + 2 NADPH + 2 H(+). The protein operates within metabolic intermediate biosynthesis; (R)-mevalonate biosynthesis; (R)-mevalonate from acetyl-CoA: step 3/3. Catalyzes the synthesis of mevalonate. The specific precursor of all isoprenoid compounds present in plants. This Hevea brasiliensis (Para rubber tree) protein is 3-hydroxy-3-methylglutaryl-coenzyme A reductase 2 (HMGR2).